Reading from the N-terminus, the 63-residue chain is MISRFCLLFLLVFVVSKIQAVEDFNEENEVDDLDDLDFLDDLDLDLSPEELEYLENWAKEFED.

The N-terminal stretch at 1-20 (MISRFCLLFLLVFVVSKIQA) is a signal peptide.

Belongs to the non-disulfide-bridged peptide (NDBP) superfamily. Long chain multifunctional peptide (group 2) family. In terms of tissue distribution, expressed by the venom gland.

Its subcellular location is the secreted. This is Anionic peptide 10.1 from Lychas mucronatus (Chinese swimming scorpion).